Here is a 444-residue protein sequence, read N- to C-terminus: Trimethylamine monooxygenase (444 aa).

Positions 12, 37, 39, 45, and 46 each coordinate FAD. NADP(+) contacts are provided by Trp-70 and Asn-72. 2 residues coordinate FAD: Asn-72 and Val-125. Residues Tyr-170, Ser-202, Ser-203, Ser-205, Arg-226, His-227, and Asn-288 each coordinate NADP(+). Positions 315 and 318 each coordinate FAD. Arg-409 contributes to the NADP(+) binding site.

This sequence belongs to the FMO family. Homodimer. FAD is required as a cofactor.

It carries out the reaction trimethylamine + NADPH + O2 = trimethylamine N-oxide + NADP(+) + H2O. Catalyzes the oxidation of trimethylamine (TMA) to produce trimethylamine N-oxide (TMAO). In vitro, has a broad substrate specificity, oxidizing many nitrogen- and sulfur-containing compounds, including dimethylamine (DMA), dimethylsulfide (DMS), dimethylsulfoxide (DMSO) and methimazole. TMA shows the highest affinity. The polypeptide is Trimethylamine monooxygenase (Pelagibacter sp. (strain HTCC7211)).